The sequence spans 81 residues: MTDLFANPDHTLDALGLRCPEPVMMVRKTVRNMQPGETLLIVADDPATTRDIPGFCRFMEHELVASQTETLPYRYLLRKNQ.

Cys-19 serves as the catalytic Cysteine persulfide intermediate.

The protein belongs to the sulfur carrier protein TusA family. In terms of assembly, interacts with IscS.

It is found in the cytoplasm. The protein operates within tRNA modification. In terms of biological role, sulfur carrier protein involved in sulfur trafficking in the cell. Part of a sulfur-relay system required for 2-thiolation during synthesis of 2-thiouridine of the modified wobble base 5-methylaminomethyl-2-thiouridine (mnm(5)s(2)U) in tRNA. Interacts with IscS and stimulates its cysteine desulfurase activity. Accepts an activated sulfur from IscS, which is then transferred to TusD, and thus determines the direction of sulfur flow from IscS to 2-thiouridine formation. Also appears to be involved in sulfur transfer for the biosynthesis of molybdopterin. The polypeptide is Sulfur carrier protein TusA (Cronobacter sakazakii (strain ATCC BAA-894) (Enterobacter sakazakii)).